The sequence spans 617 residues: MDNRGLRLFIVEGKELKGSDNGGSSSDPYVKLKFNGNSFKTETIKNTLSPVWNQSFDIGIINVNDPNAIIEVECLDWDRFGKHDSLGKVQLPIAILREAATFGQTDKWLNLDKKGYVRVGFQFNPPYPLQQHISPDGNPNIIQNQIQQQNLISSNGQLPPPVYYEPIYLKTHPTVLEAEFILPNDLYQKTIYVTGEPVRASLVLYVNQPIVVRSLFVSLKGKTSVCGKKQKELIQDLRNLLHTSIGPSSPNSQNQKVALDIGKHIYPFEFFIPKHCNSSIDGVGNYKVLYRFQFNADIVNLPDIQLEREITVVNIEDTVHRMTQSQIHEKCSKSPLTGGTIEMTITAPKNSYYPGEDIELQVHVNNSSKKKVKKIELELQRTISIQHEKGVPTQVLKVSKNFFPKIQQNQQSTQIVVMETPQTLLNSIYQSGIIKIEYKVRAVLDILDCIDLYTIFPVNIVLPDPKRVILPNPLDELSKIPRYIQDWTPRNLLSWLYFRMNCPEVVTSNPEFYQYCLSGNELLSIPDTILLEKVLKGAGTRTTEIHNAIKIEIDRVLSVRTILKDNQLPHLIQTFENELVTFDLLSSLSSIDLSHLTSTIGDRIRLQNAFEKLKLNN.

The region spanning 1–109 (MDNRGLRLFI…ATFGQTDKWL (109 aa)) is the C2 domain. Residues D20, D27, D76, D78, and D84 each coordinate Ca(2+).

It belongs to the arrestin family. Ca(2+) is required as a cofactor.

The sequence is that of Arrestin domain-containing protein B (adcB) from Dictyostelium discoideum (Social amoeba).